The following is a 459-amino-acid chain: Bifunctional protein GlmU (459 aa).

The tract at residues methionine 1–arginine 229 is pyrophosphorylase. UDP-N-acetyl-alpha-D-glucosamine-binding positions include leucine 8–glycine 11, lysine 22, glutamine 72, and glycine 77–threonine 78. Aspartate 102 is a Mg(2+) binding site. UDP-N-acetyl-alpha-D-glucosamine-binding residues include glycine 139, glutamate 154, asparagine 169, and asparagine 227. Residue asparagine 227 participates in Mg(2+) binding. Positions valine 230–asparagine 250 are linker. The segment at glycine 251–glutamine 459 is N-acetyltransferase. Residues arginine 332 and lysine 350 each coordinate UDP-N-acetyl-alpha-D-glucosamine. Histidine 362 functions as the Proton acceptor in the catalytic mechanism. UDP-N-acetyl-alpha-D-glucosamine contacts are provided by tyrosine 365 and asparagine 376. Acetyl-CoA contacts are provided by residues alanine 379, asparagine 385–tyrosine 386, serine 404, alanine 422, and arginine 439.

The protein in the N-terminal section; belongs to the N-acetylglucosamine-1-phosphate uridyltransferase family. It in the C-terminal section; belongs to the transferase hexapeptide repeat family. As to quaternary structure, homotrimer. It depends on Mg(2+) as a cofactor.

Its subcellular location is the cytoplasm. The enzyme catalyses alpha-D-glucosamine 1-phosphate + acetyl-CoA = N-acetyl-alpha-D-glucosamine 1-phosphate + CoA + H(+). The catalysed reaction is N-acetyl-alpha-D-glucosamine 1-phosphate + UTP + H(+) = UDP-N-acetyl-alpha-D-glucosamine + diphosphate. Its pathway is nucleotide-sugar biosynthesis; UDP-N-acetyl-alpha-D-glucosamine biosynthesis; N-acetyl-alpha-D-glucosamine 1-phosphate from alpha-D-glucosamine 6-phosphate (route II): step 2/2. It functions in the pathway nucleotide-sugar biosynthesis; UDP-N-acetyl-alpha-D-glucosamine biosynthesis; UDP-N-acetyl-alpha-D-glucosamine from N-acetyl-alpha-D-glucosamine 1-phosphate: step 1/1. It participates in bacterial outer membrane biogenesis; LPS lipid A biosynthesis. Functionally, catalyzes the last two sequential reactions in the de novo biosynthetic pathway for UDP-N-acetylglucosamine (UDP-GlcNAc). The C-terminal domain catalyzes the transfer of acetyl group from acetyl coenzyme A to glucosamine-1-phosphate (GlcN-1-P) to produce N-acetylglucosamine-1-phosphate (GlcNAc-1-P), which is converted into UDP-GlcNAc by the transfer of uridine 5-monophosphate (from uridine 5-triphosphate), a reaction catalyzed by the N-terminal domain. The sequence is that of Bifunctional protein GlmU from Streptococcus pneumoniae serotype 2 (strain D39 / NCTC 7466).